We begin with the raw amino-acid sequence, 1197 residues long: uncharacterized protein (1197 aa).

This is an uncharacterized protein from Sinorhizobium fredii (strain NBRC 101917 / NGR234).